The primary structure comprises 539 residues: Chaperonin GroEL (539 aa).

ATP is bound by residues 29-32 (TLGP), 86-90 (DGTTT), G413, 476-478 (NAA), and D492.

It belongs to the chaperonin (HSP60) family. As to quaternary structure, forms a cylinder of 14 subunits composed of two heptameric rings stacked back-to-back. Interacts with the co-chaperonin GroES.

The protein localises to the cytoplasm. It catalyses the reaction ATP + H2O + a folded polypeptide = ADP + phosphate + an unfolded polypeptide.. Its function is as follows. Together with its co-chaperonin GroES, plays an essential role in assisting protein folding. The GroEL-GroES system forms a nano-cage that allows encapsulation of the non-native substrate proteins and provides a physical environment optimized to promote and accelerate protein folding. This is Chaperonin GroEL from Geobacillus sp. (strain WCH70).